The following is a 473-amino-acid chain: ATP synthase subunit beta (473 aa).

Gly-158 to Thr-165 is an ATP binding site.

This sequence belongs to the ATPase alpha/beta chains family. As to quaternary structure, F-type ATPases have 2 components, CF(1) - the catalytic core - and CF(0) - the membrane proton channel. CF(1) has five subunits: alpha(3), beta(3), gamma(1), delta(1), epsilon(1). CF(0) has three main subunits: a(1), b(2) and c(9-12). The alpha and beta chains form an alternating ring which encloses part of the gamma chain. CF(1) is attached to CF(0) by a central stalk formed by the gamma and epsilon chains, while a peripheral stalk is formed by the delta and b chains.

Its subcellular location is the cell membrane. The enzyme catalyses ATP + H2O + 4 H(+)(in) = ADP + phosphate + 5 H(+)(out). Its function is as follows. Produces ATP from ADP in the presence of a proton gradient across the membrane. The catalytic sites are hosted primarily by the beta subunits. This chain is ATP synthase subunit beta, found in Geobacillus sp. (strain WCH70).